Here is a 407-residue protein sequence, read N- to C-terminus: Na(+)-translocating NADH-quinone reductase subunit F (407 aa).

A helical transmembrane segment spans residues 3 to 23 (IILGVVMFTLIVLALVLVILF). The region spanning 32 to 126 (GDITISVNDD…DMDIELPEEI (95 aa)) is the 2Fe-2S ferredoxin-type domain. Cys69, Cys75, Cys78, and Cys110 together coordinate [2Fe-2S] cluster. The 141-residue stretch at 129 to 269 (VKKWECTVIS…SGPFGEFFAK (141 aa)) folds into the FAD-binding FR-type domain. The segment at 272–389 (DAEMVFVGGG…PMMNAAVIGM (118 aa)) is catalytic.

Belongs to the NqrF family. Composed of six subunits; NqrA, NqrB, NqrC, NqrD, NqrE and NqrF. [2Fe-2S] cluster is required as a cofactor. It depends on FAD as a cofactor.

The protein localises to the cell inner membrane. The catalysed reaction is a ubiquinone + n Na(+)(in) + NADH + H(+) = a ubiquinol + n Na(+)(out) + NAD(+). Functionally, NQR complex catalyzes the reduction of ubiquinone-1 to ubiquinol by two successive reactions, coupled with the transport of Na(+) ions from the cytoplasm to the periplasm. The first step is catalyzed by NqrF, which accepts electrons from NADH and reduces ubiquinone-1 to ubisemiquinone by a one-electron transfer pathway. This is Na(+)-translocating NADH-quinone reductase subunit F from Vibrio campbellii (strain ATCC BAA-1116).